A 393-amino-acid polypeptide reads, in one-letter code: Chorismate synthase (393 aa).

NADP(+) contacts are provided by Arg40 and Arg46. Residues 129–131 (RAS), 250–251 (QA), Gly301, 316–320 (KPIST), and Arg342 contribute to the FMN site.

The protein belongs to the chorismate synthase family. Homotetramer. Requires FMNH2 as cofactor.

The catalysed reaction is 5-O-(1-carboxyvinyl)-3-phosphoshikimate = chorismate + phosphate. The protein operates within metabolic intermediate biosynthesis; chorismate biosynthesis; chorismate from D-erythrose 4-phosphate and phosphoenolpyruvate: step 7/7. Catalyzes the anti-1,4-elimination of the C-3 phosphate and the C-6 proR hydrogen from 5-enolpyruvylshikimate-3-phosphate (EPSP) to yield chorismate, which is the branch point compound that serves as the starting substrate for the three terminal pathways of aromatic amino acid biosynthesis. This reaction introduces a second double bond into the aromatic ring system. The polypeptide is Chorismate synthase (Acidobacterium capsulatum (strain ATCC 51196 / DSM 11244 / BCRC 80197 / JCM 7670 / NBRC 15755 / NCIMB 13165 / 161)).